A 424-amino-acid polypeptide reads, in one-letter code: Glutamyl-tRNA reductase (424 aa).

Substrate contacts are provided by residues 49–52 (TCNR), Ser-105, 110–112 (EPQ), and Gln-116. The active-site Nucleophile is Cys-50. Residue 185-190 (GSGETA) coordinates NADP(+).

The protein belongs to the glutamyl-tRNA reductase family. As to quaternary structure, homodimer.

It catalyses the reaction (S)-4-amino-5-oxopentanoate + tRNA(Glu) + NADP(+) = L-glutamyl-tRNA(Glu) + NADPH + H(+). Its pathway is porphyrin-containing compound metabolism; protoporphyrin-IX biosynthesis; 5-aminolevulinate from L-glutamyl-tRNA(Glu): step 1/2. Catalyzes the NADPH-dependent reduction of glutamyl-tRNA(Glu) to glutamate 1-semialdehyde (GSA). The protein is Glutamyl-tRNA reductase of Legionella pneumophila (strain Paris).